Consider the following 485-residue polypeptide: Probable glycine dehydrogenase (decarboxylating) subunit 2 (485 aa).

At Lys-273 the chain carries N6-(pyridoxal phosphate)lysine.

It belongs to the GcvP family. C-terminal subunit subfamily. In terms of assembly, the glycine cleavage system is composed of four proteins: P, T, L and H. In this organism, the P 'protein' is a heterodimer of two subunits. Pyridoxal 5'-phosphate is required as a cofactor.

It catalyses the reaction N(6)-[(R)-lipoyl]-L-lysyl-[glycine-cleavage complex H protein] + glycine + H(+) = N(6)-[(R)-S(8)-aminomethyldihydrolipoyl]-L-lysyl-[glycine-cleavage complex H protein] + CO2. The glycine cleavage system catalyzes the degradation of glycine. The P protein binds the alpha-amino group of glycine through its pyridoxal phosphate cofactor; CO(2) is released and the remaining methylamine moiety is then transferred to the lipoamide cofactor of the H protein. In Caldanaerobacter subterraneus subsp. tengcongensis (strain DSM 15242 / JCM 11007 / NBRC 100824 / MB4) (Thermoanaerobacter tengcongensis), this protein is Probable glycine dehydrogenase (decarboxylating) subunit 2.